The chain runs to 87 residues: Alpha-elapitoxin-Ls2a (87 aa).

An N-terminal signal peptide occupies residues 1–21 (MKTLLLTLVVVTIVCLDLGYT). Disulfide bonds link C24–C41, C34–C62, C47–C51, C66–C77, and C78–C83.

This sequence belongs to the three-finger toxin family. Long-chain subfamily. Type II alpha-neurotoxin sub-subfamily. As to expression, expressed by the venom gland.

The protein localises to the secreted. In terms of biological role, binds with high affinity to muscular (tested on Torpedo marmorata, Kd=1.6 nM) and neuronal (chimeric alpha-7/CHRNA7, Kd=3 nM) nicotinic acetylcholine receptor (nAChR) and inhibits acetylcholine from binding to the receptor, thereby impairing neuromuscular and neuronal transmission. Also shows a very weak inhibition on GABA(A) receptors. The toxin (10 uM) inhibits 83% of current in channels composed of alpha-1-beta-3-gamma-2 (GABRA1-GABRB3-GABRG2) subunits, 39% of current in channels composed of alpha-2-beta-2-gamma-2 (GABRA2-GABRB2-GABRG2) subunits, and 33% of current in channels composed of alpha-5-beta-2-gamma-2 (GABRA5-GABRB2-GABRG2) subunits. The chain is Alpha-elapitoxin-Ls2a from Laticauda semifasciata (Black-banded sea krait).